Reading from the N-terminus, the 883-residue chain is Phosphoenolpyruvate carboxylase (883 aa).

Catalysis depends on residues H138 and K546.

This sequence belongs to the PEPCase type 1 family. Mg(2+) serves as cofactor.

It carries out the reaction oxaloacetate + phosphate = phosphoenolpyruvate + hydrogencarbonate. In terms of biological role, forms oxaloacetate, a four-carbon dicarboxylic acid source for the tricarboxylic acid cycle. The sequence is that of Phosphoenolpyruvate carboxylase from Salmonella gallinarum (strain 287/91 / NCTC 13346).